The primary structure comprises 372 residues: Queuine tRNA-ribosyltransferase (372 aa).

The active-site Proton acceptor is Asp-92. Residues 92 to 96 (DSGGY), Asp-146, Gln-188, and Gly-215 each bind substrate. An RNA binding region spans residues 246–252 (GIGSLRE). Catalysis depends on Asp-265, which acts as the Nucleophile. The interval 270 to 274 (TRLGR) is RNA binding; important for wobble base 34 recognition. The Zn(2+) site is built by Cys-303, Cys-305, Cys-308, and His-334.

Belongs to the queuine tRNA-ribosyltransferase family. Homodimer. Within each dimer, one monomer is responsible for RNA recognition and catalysis, while the other monomer binds to the replacement base PreQ1. Requires Zn(2+) as cofactor.

It catalyses the reaction 7-aminomethyl-7-carbaguanine + guanosine(34) in tRNA = 7-aminomethyl-7-carbaguanosine(34) in tRNA + guanine. It functions in the pathway tRNA modification; tRNA-queuosine biosynthesis. Its function is as follows. Catalyzes the base-exchange of a guanine (G) residue with the queuine precursor 7-aminomethyl-7-deazaguanine (PreQ1) at position 34 (anticodon wobble position) in tRNAs with GU(N) anticodons (tRNA-Asp, -Asn, -His and -Tyr). Catalysis occurs through a double-displacement mechanism. The nucleophile active site attacks the C1' of nucleotide 34 to detach the guanine base from the RNA, forming a covalent enzyme-RNA intermediate. The proton acceptor active site deprotonates the incoming PreQ1, allowing a nucleophilic attack on the C1' of the ribose to form the product. After dissociation, two additional enzymatic reactions on the tRNA convert PreQ1 to queuine (Q), resulting in the hypermodified nucleoside queuosine (7-(((4,5-cis-dihydroxy-2-cyclopenten-1-yl)amino)methyl)-7-deazaguanosine). The sequence is that of Queuine tRNA-ribosyltransferase from Prochlorococcus marinus (strain MIT 9211).